A 373-amino-acid polypeptide reads, in one-letter code: tRNA (guanine(26)-N(2))-dimethyltransferase (373 aa).

Residues 2–365 enclose the Trm1 methyltransferase domain; the sequence is KIISEGETKL…AELSDLVVLI (364 aa). 5 residues coordinate S-adenosyl-L-methionine: R35, R66, D86, D113, and A114.

Belongs to the class I-like SAM-binding methyltransferase superfamily. Trm1 family.

The catalysed reaction is guanosine(26) in tRNA + 2 S-adenosyl-L-methionine = N(2)-dimethylguanosine(26) in tRNA + 2 S-adenosyl-L-homocysteine + 2 H(+). Functionally, dimethylates a single guanine residue at position 26 of a number of tRNAs using S-adenosyl-L-methionine as donor of the methyl groups. The protein is tRNA (guanine(26)-N(2))-dimethyltransferase of Methanococcus maripaludis (Methanococcus deltae).